The following is a 461-amino-acid chain: D-phenylhydantoinase (461 aa).

Residues H59, H61, and K151 each coordinate a divalent metal cation. K151 carries the post-translational modification N6-carboxylysine. Y156 contacts substrate. A divalent metal cation contacts are provided by H182 and H239. A substrate-binding site is contributed by S286. Residue D313 coordinates a divalent metal cation. Residue N335 participates in substrate binding.

This sequence belongs to the metallo-dependent hydrolases superfamily. Hydantoinase/dihydropyrimidinase family. In terms of assembly, homotetramer. A divalent metal cation serves as cofactor. Carboxylation allows a single lysine to coordinate two divalent metal cations.

It catalyses the reaction D-5-phenylhydantoin + H2O = N-carbamoyl-D-phenylglycine + H(+). In terms of biological role, catalyzes the stereospecific hydrolysis of the cyclic amide bond of D-hydantoin derivatives with an aromatic side chains at the 5'-position. Has no activity on dihydropyrimidines. The physiological function is unknown. In Escherichia coli O81 (strain ED1a), this protein is D-phenylhydantoinase.